The chain runs to 627 residues: Altered inheritance of mitochondria protein 9, mitochondrial (627 aa).

Residues 1–43 constitute a mitochondrion transit peptide; it reads MIRYTVAGHSRRCVVGASKRVGAIKCITVAATKRFISNKPNEV.

The protein belongs to the AIM9 family.

It localises to the mitochondrion. This chain is Altered inheritance of mitochondria protein 9, mitochondrial (AIM9), found in Saccharomyces cerevisiae (strain YJM789) (Baker's yeast).